The primary structure comprises 478 residues: Bifunctional protein HldE (478 aa).

The ribokinase stretch occupies residues 1–318 (MKVTLPDFRQ…ENAIRGRADT (318 aa)). Position 195 to 198 (195 to 198 (NLSE)) interacts with ATP. Asp264 is an active-site residue. Residues 344 to 478 (MTNGCFDILH…NMIKASTSQS (135 aa)) form a cytidylyltransferase region.

In the N-terminal section; belongs to the carbohydrate kinase PfkB family. The protein in the C-terminal section; belongs to the cytidylyltransferase family. In terms of assembly, homodimer.

It carries out the reaction D-glycero-beta-D-manno-heptose 7-phosphate + ATP = D-glycero-beta-D-manno-heptose 1,7-bisphosphate + ADP + H(+). The catalysed reaction is D-glycero-beta-D-manno-heptose 1-phosphate + ATP + H(+) = ADP-D-glycero-beta-D-manno-heptose + diphosphate. The protein operates within nucleotide-sugar biosynthesis; ADP-L-glycero-beta-D-manno-heptose biosynthesis; ADP-L-glycero-beta-D-manno-heptose from D-glycero-beta-D-manno-heptose 7-phosphate: step 1/4. It functions in the pathway nucleotide-sugar biosynthesis; ADP-L-glycero-beta-D-manno-heptose biosynthesis; ADP-L-glycero-beta-D-manno-heptose from D-glycero-beta-D-manno-heptose 7-phosphate: step 3/4. In terms of biological role, catalyzes the phosphorylation of D-glycero-D-manno-heptose 7-phosphate at the C-1 position to selectively form D-glycero-beta-D-manno-heptose-1,7-bisphosphate. Its function is as follows. Catalyzes the ADP transfer from ATP to D-glycero-beta-D-manno-heptose 1-phosphate, yielding ADP-D-glycero-beta-D-manno-heptose. This Pectobacterium atrosepticum (strain SCRI 1043 / ATCC BAA-672) (Erwinia carotovora subsp. atroseptica) protein is Bifunctional protein HldE.